A 178-amino-acid chain; its full sequence is MATPMHRLIARRKAEANKQHVRCQKCLEFGHWTYECKGKRKYLHRPSRTAELKKALKEKENRLLLQSIGETNIEKKIKKKKRSKSVTSSSTSSSDSSASESSSESETSASSSSEDSDSDESLSSSSSSSSSSACSSSSSSSSSSSSSDSDSSSSSSSSSSSSESSSDDEPQKKKKKKK.

A CCHC-type zinc finger spans residues V21–G38. Residues Q66–K178 form a disordered region. 2 stretches are compositionally biased toward low complexity: residues S85–S113 and S121–S164.

This is Zinc finger CCHC domain-containing protein 10 (Zcchc10) from Mus musculus (Mouse).